Consider the following 132-residue polypeptide: Small ribosomal subunit protein eS17B (132 aa).

The residue at position 43 (S43) is a Phosphoserine.

Belongs to the eukaryotic ribosomal protein eS17 family. As to quaternary structure, component of the small ribosomal subunit (SSU). Mature yeast ribosomes consist of a small (40S) and a large (60S) subunit. The 40S small subunit contains 1 molecule of ribosomal RNA (18S rRNA) and at least 33 different proteins. The large 60S subunit contains 3 rRNA molecules (25S, 5.8S and 5S rRNA) and at least 46 different proteins.

It is found in the cytoplasm. Component of the ribosome, a large ribonucleoprotein complex responsible for the synthesis of proteins in the cell. The small ribosomal subunit (SSU) binds messenger RNAs (mRNAs) and translates the encoded message by selecting cognate aminoacyl-transfer RNA (tRNA) molecules. The large subunit (LSU) contains the ribosomal catalytic site termed the peptidyl transferase center (PTC), which catalyzes the formation of peptide bonds, thereby polymerizing the amino acids delivered by tRNAs into a polypeptide chain. The nascent polypeptides leave the ribosome through a tunnel in the LSU and interact with protein factors that function in enzymatic processing, targeting, and the membrane insertion of nascent chains at the exit of the ribosomal tunnel. The polypeptide is Small ribosomal subunit protein eS17B (rps1702) (Schizosaccharomyces pombe (strain 972 / ATCC 24843) (Fission yeast)).